Consider the following 362-residue polypeptide: Serine/threonine-protein kinase SRK2E (362 aa).

A phosphoserine; by autocatalysis mark is found at serine 7, serine 18, serine 29, and serine 43. The 257-residue stretch at 21–277 (YELVKDIGSG…IPEIRNHEWF (257 aa)) folds into the Protein kinase domain. Residue 27–35 (IGSGNFGVA) participates in ATP binding. Lysine 50 serves as a coordination point for ATP. Residue aspartate 140 is the Proton acceptor of the active site. The interval 160-186 (DFGYSKSSVLHSQPKSTVGTPAYIAPE) is activation loop. The residue at position 175 (serine 175) is a Phosphoserine. The interval 283-318 (ADLMNDNTMTTQFDESDQPGQSIEEIMQIIAEATVP) is domain I; osmotic stress response, required for the kinase activity. The domain II; ABA response and ABI1 binding stretch occupies residues 319-362 (PAGTQNLNHYLTGSLDIDDDMEEDLESDLDDLDIDSSGEIVYAM).

It belongs to the protein kinase superfamily. Ser/Thr protein kinase family. As to quaternary structure, interacts with ABI1, PP2CA and SLAC1. Interacts with B'ALPHA, B'BETA, B'DELTA, PP2AA2, PP2AA3, PP2A1 and PP2A2. Associates with MAPKKK18 within the nucleus. Interacts with I-2, TOPP1 and TOPP2. Interacts with ABI2. Post-translationally, autophosphorylation on residues Ser-7, Ser-18, Ser-29, Ser-43, Ser-175 and/or Thr-176. Only the phosphorylation of Ser-175 is crucial for the kinase activity. The phosphorylation of Ser-43 may repress the ABA signaling pathway in absence of ABA. In terms of tissue distribution, expressed in seedlings, leaves, flowers, stems, and roots, but restricted to guard cells and vascular tissue.

It is found in the nucleus. The enzyme catalyses L-seryl-[protein] + ATP = O-phospho-L-seryl-[protein] + ADP + H(+). The catalysed reaction is L-threonyl-[protein] + ATP = O-phospho-L-threonyl-[protein] + ADP + H(+). Kinase activity enhanced by ABA and low humidity. Repressed by PP2CA independently of its phosphatase activity. Probably inactivated by ABI1. Repressed by TOPP1. Negatively regulated by ABI2. In terms of biological role, activator of the abscisic acid (ABA) signaling pathway that regulates numerous ABA responses, such as stomata closure in response to drought, darkness, high CO(2), plant pathogens, or decreases in atmospheric relative humidity (RH). Involved in the resistance to drought by avoiding water loss. Required for the stomata closure mediated by pathogen-associated molecular pattern (PAMPs) (e.g. flg22 and LPS) of pathogenic bacteria such as P.syringae pv. tomato (Pst) and E.coli O157:H7. As a plant defense process, stomata are closed transiently in order to limit invaders, but actively reopened by bacteria after a few hours; virulent strains (e.g. Pst DC3000) are more efficient than avirulent strains (e.g. Pst DC3000 AvrRpt2) in reopening stomata. Mediates the phosphorylation and activation of the S-type anion efflux channel SLAC1, and thus promotes stomata closure. Essential for stomatal closure in response to reactive oxygen species (ROS). Promotes MAPKKK18 activity upon abscisic acid (ABA) treatment. This is Serine/threonine-protein kinase SRK2E from Arabidopsis thaliana (Mouse-ear cress).